Reading from the N-terminus, the 143-residue chain is Adrenodoxin, mitochondrial (143 aa).

The transit peptide at 1–19 directs the protein to the mitochondrion; sequence CSAVAVRTLRPLSLSARAA. In terms of domain architecture, 2Fe-2S ferredoxin-type spans 26–130; that stretch reads ITVHFINRDG…NMTVRVPEAV (105 aa). Residues cysteine 65, cysteine 71, cysteine 74, and cysteine 111 each contribute to the [2Fe-2S] cluster site.

Belongs to the adrenodoxin/putidaredoxin family. [2Fe-2S] cluster serves as cofactor.

It is found in the mitochondrion matrix. Its function is as follows. Essential for the synthesis of various steroid hormones. Participates in the reduction of mitochondrial cytochrome P450 for steroidogenesis. Transfers electrons from adrenodoxin reductase to CYP11A1, a cytochrome P450 that catalyzes cholesterol side-chain cleavage. Does not form a ternary complex with adrenodoxin reductase and CYP11A1 but shuttles between the two enzymes to transfer electrons. This chain is Adrenodoxin, mitochondrial (FDX1), found in Gallus gallus (Chicken).